The chain runs to 1063 residues: Cellulose synthase A catalytic subunit 7 [UDP-forming] (1063 aa).

The Cytoplasmic portion of the chain corresponds to 1-213 (MDTASVTGGE…IPSSKINPYR (213 aa)). The Zn(2+) site is built by Cys18, Cys21, Cys37, Cys40, Cys45, Cys48, Cys60, and Cys63. An RING-type; degenerate zinc finger spans residues 18 to 64 (CRVCGEEVAAREDGKPFVACAECGFPVCKPCYEYERSEGTQCCPQCN). The segment at 116–154 (NGEQPAQKWRPGGPALSSFTGSVAGKDLEQEREMEGGME) is disordered. The segment covering 141-154 (KDLEQEREMEGGME) has biased composition (basic and acidic residues). Residues 214 to 234 (IVIVLRLVVLCFFLKFRITTP) traverse the membrane as a helical segment. Residues 235–237 (AMD) lie on the Extracellular side of the membrane. Residues 238–258 (AVPLWLASVICELWFALSWIL) form a helical membrane-spanning segment. Topologically, residues 259 to 845 (DQLPKWSPVT…TNTIVYPFTS (587 aa)) are cytoplasmic. UDP-alpha-D-glucose-binding residues include Ser297, Lys303, Glu304, and Asp333. Residue Asp333 is part of the active site. A coiled-coil region spans residues 387-414 (VKERRAMKREYEEFKVRINALVAKAQKK). Residue Lys474 participates in UDP-alpha-D-glucose binding. 2 residues coordinate Mn(2+): Lys475 and Asp499. Residue Asp762 is part of the active site. Residues 846 to 866 (IPLLAYCTIPAVCLLTGKFII) traverse the membrane as a helical segment. Residues 867-871 (PTLNN) are Extracellular-facing. The chain crosses the membrane as a helical span at residues 872–892 (LASIWFIALFLSIIATGVLEL). The Cytoplasmic segment spans residues 893 to 907 (RWSGVSIEDWWRNEQ). Residues 908–928 (FWVIGGVSAHLFAVFQGLLKV) form a helical membrane-spanning segment. The Extracellular portion of the chain corresponds to 929–959 (LGGVDTNFTVTSKAAADETDAFGELYLFKWT). Asn935 carries an N-linked (GlcNAc...) asparagine glycan. The chain crosses the membrane as a helical span at residues 960-980 (TLLVPPTTLIIINMVGIVAGV). The Cytoplasmic portion of the chain corresponds to 981 to 991 (SDAVNNGYGSW). Residues 992–1012 (GPLFGKLFFSFWVILHLYPFL) form a helical membrane-spanning segment. The Extracellular portion of the chain corresponds to 1013–1021 (KGLMGRQNR). Residues 1022–1042 (TPTIVVLWSILLASIFSLVWV) form a helical membrane-spanning segment. Topologically, residues 1043–1063 (RIDPFIPKPKGPVLKPCGVSC) are cytoplasmic.

It belongs to the glycosyltransferase 2 family. Plant cellulose synthase subfamily. The cofactor is Mn(2+). Zn(2+) is required as a cofactor.

It is found in the cell membrane. It catalyses the reaction [(1-&gt;4)-beta-D-glucosyl](n) + UDP-alpha-D-glucose = [(1-&gt;4)-beta-D-glucosyl](n+1) + UDP + H(+). Its pathway is glycan metabolism; plant cellulose biosynthesis. Catalytic subunit of cellulose synthase terminal complexes ('rosettes'), required for beta-1,4-glucan microfibril crystallization, a major mechanism of the cell wall formation. Involved in the secondary cell wall formation. This Oryza sativa subsp. japonica (Rice) protein is Cellulose synthase A catalytic subunit 7 [UDP-forming] (CESA7).